The primary structure comprises 423 residues: Pentamidine resistance factor, mitochondrial (423 aa).

A helical membrane pass occupies residues 199-219 (PVFFTLVFIFEEVSVLIFTFF).

Interacts with COX18. This interaction may be essential for its insertion into mitochondrial inner membrane.

The protein localises to the mitochondrion inner membrane. In terms of biological role, probably involved in mitochondrial export. Confers resistance to the anti-pneumocystis carinii drug pentamidine. May act by the removal of pentamidine, or its damage targets, from the matrix by an active-transport mechanism. The polypeptide is Pentamidine resistance factor, mitochondrial (PNT1) (Saccharomyces cerevisiae (strain ATCC 204508 / S288c) (Baker's yeast)).